We begin with the raw amino-acid sequence, 352 residues long: Chorismate synthase (352 aa).

NADP(+)-binding residues include Arg48 and Arg54. FMN is bound by residues Arg125 to Ser127, Asn238 to Ala239, Ala278, Lys293 to Ser297, and Arg319.

It belongs to the chorismate synthase family. Homotetramer. The cofactor is FMNH2.

It carries out the reaction 5-O-(1-carboxyvinyl)-3-phosphoshikimate = chorismate + phosphate. The protein operates within metabolic intermediate biosynthesis; chorismate biosynthesis; chorismate from D-erythrose 4-phosphate and phosphoenolpyruvate: step 7/7. In terms of biological role, catalyzes the anti-1,4-elimination of the C-3 phosphate and the C-6 proR hydrogen from 5-enolpyruvylshikimate-3-phosphate (EPSP) to yield chorismate, which is the branch point compound that serves as the starting substrate for the three terminal pathways of aromatic amino acid biosynthesis. This reaction introduces a second double bond into the aromatic ring system. The polypeptide is Chorismate synthase (Coxiella burnetii (strain RSA 493 / Nine Mile phase I)).